The sequence spans 350 residues: Dihydroorotase (350 aa).

Residues His-17 and His-19 each coordinate Zn(2+). Residues His-19–Arg-21 and Asn-45 contribute to the substrate site. Residues Lys-103, His-140, and His-178 each coordinate Zn(2+). Lys-103 bears the N6-carboxylysine mark. A substrate-binding site is contributed by His-140. A substrate-binding site is contributed by Leu-223. Residue Asp-251 coordinates Zn(2+). The active site involves Asp-251. Substrate is bound by residues His-255 and Ala-267.

The protein belongs to the metallo-dependent hydrolases superfamily. DHOase family. Class II DHOase subfamily. In terms of assembly, homodimer. Requires Zn(2+) as cofactor.

It carries out the reaction (S)-dihydroorotate + H2O = N-carbamoyl-L-aspartate + H(+). Its pathway is pyrimidine metabolism; UMP biosynthesis via de novo pathway; (S)-dihydroorotate from bicarbonate: step 3/3. Its function is as follows. Catalyzes the reversible cyclization of carbamoyl aspartate to dihydroorotate. The protein is Dihydroorotase of Erwinia tasmaniensis (strain DSM 17950 / CFBP 7177 / CIP 109463 / NCPPB 4357 / Et1/99).